A 742-amino-acid chain; its full sequence is Phosphoribosylformylglycinamidine synthase subunit PurL (742 aa).

Residue H53 is part of the active site. ATP contacts are provided by Y56 and K95. E97 is a Mg(2+) binding site. Residues 98–101 and R120 contribute to the substrate site; that span reads SHNH. Catalysis depends on H99, which acts as the Proton acceptor. Position 121 (D121) interacts with Mg(2+). Substrate is bound at residue Q244. D274 serves as a coordination point for Mg(2+). 318–320 provides a ligand contact to substrate; sequence ESQ. 2 residues coordinate ATP: D501 and G538. Residue N539 coordinates Mg(2+). S541 is a binding site for substrate.

The protein belongs to the FGAMS family. Monomer. Part of the FGAM synthase complex composed of 1 PurL, 1 PurQ and 2 PurS subunits.

The protein resides in the cytoplasm. The catalysed reaction is N(2)-formyl-N(1)-(5-phospho-beta-D-ribosyl)glycinamide + L-glutamine + ATP + H2O = 2-formamido-N(1)-(5-O-phospho-beta-D-ribosyl)acetamidine + L-glutamate + ADP + phosphate + H(+). It participates in purine metabolism; IMP biosynthesis via de novo pathway; 5-amino-1-(5-phospho-D-ribosyl)imidazole from N(2)-formyl-N(1)-(5-phospho-D-ribosyl)glycinamide: step 1/2. Its function is as follows. Part of the phosphoribosylformylglycinamidine synthase complex involved in the purines biosynthetic pathway. Catalyzes the ATP-dependent conversion of formylglycinamide ribonucleotide (FGAR) and glutamine to yield formylglycinamidine ribonucleotide (FGAM) and glutamate. The FGAM synthase complex is composed of three subunits. PurQ produces an ammonia molecule by converting glutamine to glutamate. PurL transfers the ammonia molecule to FGAR to form FGAM in an ATP-dependent manner. PurS interacts with PurQ and PurL and is thought to assist in the transfer of the ammonia molecule from PurQ to PurL. This Limosilactobacillus reuteri (strain DSM 20016) (Lactobacillus reuteri) protein is Phosphoribosylformylglycinamidine synthase subunit PurL.